Reading from the N-terminus, the 973-residue chain is Translation initiation factor IF-2 (973 aa).

Residues 52-388 (PDQEEVKPAA…QAQKPAQPLE (337 aa)) are disordered. 8 stretches are compositionally biased toward basic and acidic residues: residues 83–120 (ESRK…DHYK), 128–148 (VPSR…DKAR), 157–172 (QGAR…ERTR), 186–202 (VQQE…RPPF), 210–246 (PQHE…DKGA), 272–288 (RAGE…ETKP), 314–333 (LLDD…EKQK), and 343–360 (KSRE…ERLR). Residues 374–386 (AKPQEQAQKPAQP) show a composition bias toward low complexity. In terms of domain architecture, tr-type G spans 472-641 (DRPCVVTVMG…LLVAEMSELK (170 aa)). The interval 481–488 (GHVDHGKT) is G1. 481-488 (GHVDHGKT) lines the GTP pocket. A G2 region spans residues 506–510 (GITQH). Residues 527–530 (DTPG) are G3. GTP is bound by residues 527–531 (DTPGH) and 581–584 (NKID). The segment at 581 to 584 (NKID) is G4. The G5 stretch occupies residues 617-619 (SAL).

The protein belongs to the TRAFAC class translation factor GTPase superfamily. Classic translation factor GTPase family. IF-2 subfamily.

It is found in the cytoplasm. In terms of biological role, one of the essential components for the initiation of protein synthesis. Protects formylmethionyl-tRNA from spontaneous hydrolysis and promotes its binding to the 30S ribosomal subunits. Also involved in the hydrolysis of GTP during the formation of the 70S ribosomal complex. The polypeptide is Translation initiation factor IF-2 (Pelotomaculum thermopropionicum (strain DSM 13744 / JCM 10971 / SI)).